We begin with the raw amino-acid sequence, 186 residues long: ADP-ribosylation factor-like protein DDB_G0292332 (186 aa).

GTP contacts are provided by residues 24–31 (GVENVGKT), 78–82 (DIGGK), and 138–141 (NKQD).

The protein belongs to the small GTPase superfamily. Arf family.

Its function is as follows. Binds and exchanges GTP and GDP. The protein is ADP-ribosylation factor-like protein DDB_G0292332 of Dictyostelium discoideum (Social amoeba).